The following is a 232-amino-acid chain: Orotate phosphoribosyltransferase (232 aa).

5-phospho-alpha-D-ribose 1-diphosphate-binding positions include R107, K108, K111, H113, and 133–141 (EDLTTAGGS). T137 provides a ligand contact to orotate.

It belongs to the purine/pyrimidine phosphoribosyltransferase family. PyrE subfamily. In terms of assembly, homodimer. It depends on Mg(2+) as a cofactor.

The enzyme catalyses orotidine 5'-phosphate + diphosphate = orotate + 5-phospho-alpha-D-ribose 1-diphosphate. The protein operates within pyrimidine metabolism; UMP biosynthesis via de novo pathway; UMP from orotate: step 1/2. Its function is as follows. Catalyzes the transfer of a ribosyl phosphate group from 5-phosphoribose 1-diphosphate to orotate, leading to the formation of orotidine monophosphate (OMP). The polypeptide is Orotate phosphoribosyltransferase (Rhizobium meliloti (strain 1021) (Ensifer meliloti)).